The primary structure comprises 432 residues: Proteinase-activated receptor 1 (432 aa).

The signal sequence occupies residues 1–21 (MGPRRLLLVAVGLSLCGPLLS). Positions 22-45 (SRVPMRQPESERMYATPYATPNPR) are cleaved as a propeptide — removed for receptor activation. Topologically, residues 46-109 (SFFLRNPSED…SGYLTSPWLT (64 aa)) are extracellular. N-linked (GlcNAc...) asparagine glycosylation is found at N69 and N82. A helical membrane pass occupies residues 110 to 135 (LFIPSVYTFVFIVSLPLNILAIAVFV). The Cytoplasmic portion of the chain corresponds to 136 to 144 (FRMKVKKPA). The chain crosses the membrane as a helical span at residues 145–164 (VVYMLHLAMADVLFVSVLPF). Residues 165 to 183 (KISYYFSGTDWQFGSGMCR) are Extracellular-facing. A disulfide bridge connects residues C182 and C261. The helical transmembrane segment at 184–205 (FATAACYCNMYASIMLMTVISI) threads the bilayer. The Cytoplasmic portion of the chain corresponds to 206–225 (DRFLAVVYPIQSLSWRTLGR). Residues 226–246 (ANFTCVVIWVMAIMGVVPLLL) form a helical membrane-spanning segment. Residues 247-275 (KEQTTQVPGLNITTCHDVLNETLLHGFYS) are Extracellular-facing. N-linked (GlcNAc...) asparagine glycans are attached at residues N257 and N266. A helical transmembrane segment spans residues 276-295 (YYFSAFSAIFFLVPLIISTV). Over 296–318 (CYTSIIRCLSSSAVANRSKKSRA) the chain is Cytoplasmic. Residues 319–341 (LFLSAAVFCIFIVCFGPTNVLLI) traverse the membrane as a helical segment. The Extracellular segment spans residues 342-357 (VHYLLLSDSPGTETAY). The helical transmembrane segment at 358–381 (FAYLLCVCVTSVASCIDPLIYYYA) threads the bilayer. Residues 382–432 (SSECQKHLYSILCCRESSDSNSCNSTGQLMPSKMDTCSSHLNNSIYKKLLA) are Cytoplasmic-facing. S425 is modified (phosphoserine).

It belongs to the G-protein coupled receptor 1 family. Proteolytic cleavage by thrombin generates a new N-terminus that functions as a tethered ligand. Also proteolytically cleaved by cathepsin CTSG. Post-translationally, phosphorylated in the C-terminal tail; probably mediating desensitization prior to the uncoupling and internalization of the receptor. In terms of tissue distribution, expressed in primary cultured oligodendrocytes.

The protein resides in the cell membrane. High affinity receptor that binds the activated thrombin, leading to calcium release from intracellular stores. The thrombin-activated receptor signaling pathway is mediated through PTX-insensitive G proteins, activation of phospholipase C resulting in the production of 1D-myo-inositol 1,4,5-trisphosphate (InsP3) which binds to InsP3 receptors causing calcium release from the stores. In astrocytes, the calcium released into the cytosol allows the Ca(2+)-dependent release of L-glutamate into the synaptic cleft through BEST1, that targets the neuronal postsynaptic GRIN2A/NMDAR receptor resulting in the synaptic plasticity regulation. May play a role in platelets activation and in vascular development. Mediates up-regulation of pro-inflammatory cytokines, such as MCP-1/CCL2 and IL6, triggered by coagulation factor Xa (F10) in cardiac fibroblasts and umbilical vein endothelial cells. The chain is Proteinase-activated receptor 1 from Rattus norvegicus (Rat).